The primary structure comprises 299 residues: Serine/threonine-protein kinase 1 (299 aa).

A Protein kinase domain is found at I39–F277. Residues F45–V53 and K66 each bind ATP. D153 functions as the Proton acceptor in the catalytic mechanism.

It belongs to the protein kinase superfamily. Ser/Thr protein kinase family.

It is found in the virion. The protein localises to the host cytoplasm. The enzyme catalyses L-seryl-[protein] + ATP = O-phospho-L-seryl-[protein] + ADP + H(+). It carries out the reaction L-threonyl-[protein] + ATP = O-phospho-L-threonyl-[protein] + ADP + H(+). Functionally, essential for viral replication. It may mediate the virus progression through DNA replication. The protein is Serine/threonine-protein kinase 1 of African swine fever virus (isolate Tick/Malawi/Lil 20-1/1983) (ASFV).